Reading from the N-terminus, the 292-residue chain is Phosphatidylglycerol--prolipoprotein diacylglyceryl transferase (292 aa).

A run of 3 helical transmembrane segments spans residues 18 to 38 (LFGV…GLLI), 67 to 87 (LLTW…VLFY), and 105 to 125 (GGMS…AFCL). An a 1,2-diacyl-sn-glycero-3-phospho-(1'-sn-glycerol)-binding site is contributed by Arg150. 3 consecutive transmembrane segments (helical) span residues 193–213 (QIYE…LLVW), 222–242 (GSVS…VEFV), and 266–286 (GLTM…YLIL).

Belongs to the Lgt family.

The protein localises to the cell inner membrane. It carries out the reaction L-cysteinyl-[prolipoprotein] + a 1,2-diacyl-sn-glycero-3-phospho-(1'-sn-glycerol) = an S-1,2-diacyl-sn-glyceryl-L-cysteinyl-[prolipoprotein] + sn-glycerol 1-phosphate + H(+). It participates in protein modification; lipoprotein biosynthesis (diacylglyceryl transfer). Functionally, catalyzes the transfer of the diacylglyceryl group from phosphatidylglycerol to the sulfhydryl group of the N-terminal cysteine of a prolipoprotein, the first step in the formation of mature lipoproteins. The chain is Phosphatidylglycerol--prolipoprotein diacylglyceryl transferase from Cereibacter sphaeroides (strain ATCC 17023 / DSM 158 / JCM 6121 / CCUG 31486 / LMG 2827 / NBRC 12203 / NCIMB 8253 / ATH 2.4.1.) (Rhodobacter sphaeroides).